The following is a 144-amino-acid chain: Cytochrome c oxidase subunit 4 isoform 1, mitochondrial (144 aa).

Residues 1-73 lie on the Mitochondrial matrix side of the membrane; the sequence is SVVKSEDFSL…SFAEMNRGSN (73 aa). The residue at position 4 (Lys4) is an N6-acetyllysine; alternate. Lys4 carries the post-translational modification N6-succinyllysine; alternate. Position 28 is an N6-acetyllysine (Lys28). 2 positions are modified to phosphoserine: Ser31 and Ser33. Lys35 carries the post-translational modification N6-acetyllysine; alternate. Lys35 carries the post-translational modification N6-succinyllysine; alternate. Position 42 is an N6-acetyllysine (Lys42). A helical transmembrane segment spans residues 74–99; it reads EWKTVVGGAMFFIGFTALIIMWQKRH. At 100-144 the chain is on the mitochondrial intermembrane side; it reads VYGPLPQSFDKEWVAKQTKRMLDMKVNPIQGLASKWDYEKNEWKK.

This sequence belongs to the cytochrome c oxidase IV family. Component of the cytochrome c oxidase (complex IV, CIV), a multisubunit enzyme composed of 14 subunits. The complex is composed of a catalytic core of 3 subunits MT-CO1, MT-CO2 and MT-CO3, encoded in the mitochondrial DNA, and 11 supernumerary subunits COX4I, COX5A, COX5B, COX6A, COX6B, COX6C, COX7A, COX7B, COX7C, COX8 and NDUFA4, which are encoded in the nuclear genome. The complex exists as a monomer or a dimer and forms supercomplexes (SCs) in the inner mitochondrial membrane with NADH-ubiquinone oxidoreductase (complex I, CI) and ubiquinol-cytochrome c oxidoreductase (cytochrome b-c1 complex, complex III, CIII), resulting in different assemblies (supercomplex SCI(1)III(2)IV(1) and megacomplex MCI(2)III(2)IV(2)). Interacts with PHB2; the interaction decreases in absence of SPHK2. Interacts with AFG1L. Interacts with ABCB7; this interaction allows the regulation of cellular iron homeostasis and cellular reactive oxygen species (ROS) levels in cardiomyocytes. Interacts with FLVCR2; this interaction occurs in the absence of heme and is disrupted upon heme binding. Interacts with IRGC.

It localises to the mitochondrion inner membrane. It functions in the pathway energy metabolism; oxidative phosphorylation. Its function is as follows. Component of the cytochrome c oxidase, the last enzyme in the mitochondrial electron transport chain which drives oxidative phosphorylation. The respiratory chain contains 3 multisubunit complexes succinate dehydrogenase (complex II, CII), ubiquinol-cytochrome c oxidoreductase (cytochrome b-c1 complex, complex III, CIII) and cytochrome c oxidase (complex IV, CIV), that cooperate to transfer electrons derived from NADH and succinate to molecular oxygen, creating an electrochemical gradient over the inner membrane that drives transmembrane transport and the ATP synthase. Cytochrome c oxidase is the component of the respiratory chain that catalyzes the reduction of oxygen to water. Electrons originating from reduced cytochrome c in the intermembrane space (IMS) are transferred via the dinuclear copper A center (CU(A)) of subunit 2 and heme A of subunit 1 to the active site in subunit 1, a binuclear center (BNC) formed by heme A3 and copper B (CU(B)). The BNC reduces molecular oxygen to 2 water molecules using 4 electrons from cytochrome c in the IMS and 4 protons from the mitochondrial matrix. This chain is Cytochrome c oxidase subunit 4 isoform 1, mitochondrial (COX4I1), found in Pongo pygmaeus (Bornean orangutan).